Here is a 69-residue protein sequence, read N- to C-terminus: U2-agatoxin-Ao1g (69 aa).

The N-terminal stretch at 1 to 20 is a signal peptide; the sequence is MKAIISLLLISAMVFSMIEA. The propeptide occupies 21-34; it reads VPVEEGLQLFEGER. 3 cysteine pairs are disulfide-bonded: Cys-36/Cys-52, Cys-43/Cys-57, and Cys-51/Cys-67. The residue at position 68 (Leu-68) is a Leucine amide.

Belongs to the neurotoxin 01 (U2-agtx) family. As to expression, expressed by the venom gland.

The protein resides in the secreted. In terms of biological role, insect active toxin causing rapid but reversible paralysis in crickets. No activity shown in mammals. Does not show effect on mammalian voltage-gated calcium channels. The chain is U2-agatoxin-Ao1g from Agelena orientalis (Funnel-web spider).